The primary structure comprises 285 residues: Tetraspanin-3 (285 aa).

Topologically, residues 1–6 are cytoplasmic; that stretch reads MRTSNH. Residues 7–27 form a helical membrane-spanning segment; it reads LIGLVNFLTFLLSIPILGGGI. At 28 to 43 the chain is on the extracellular side; that stretch reads WLSSRANSTDCLRFLQ. Asparagine 34 carries N-linked (GlcNAc...) asparagine glycosylation. The helical transmembrane segment at 44–64 threads the bilayer; that stretch reads WPLIVIGISIMVVSLAGFAGA. Topologically, residues 65-71 are cytoplasmic; the sequence is CYRNKFL. A helical membrane pass occupies residues 72–92; that stretch reads MWLYLVVMLLIIAALIGFIIF. Over 93–235 the chain is Extracellular; it reads AYAVTDKGSG…LGSLKKSWRK (143 aa). The N-linked (GlcNAc...) asparagine glycan is linked to asparagine 187. Residues 236–256 traverse the membrane as a helical segment; it reads VSVINIVVLIILVIFYVIAYA. Topologically, residues 257 to 285 are cytoplasmic; it reads AYRNVKRIDNDEPAGEARMTKSHPSHFHL.

This sequence belongs to the tetraspanin (TM4SF) family.

Its subcellular location is the cell membrane. In terms of biological role, may be involved in the regulation of cell differentiation. This Arabidopsis thaliana (Mouse-ear cress) protein is Tetraspanin-3 (TET3).